A 205-amino-acid chain; its full sequence is LexA repressor (205 aa).

Positions isoleucine 28 to isoleucine 48 form a DNA-binding region, H-T-H motif. Residues serine 125 and lysine 163 each act as for autocatalytic cleavage activity in the active site.

Belongs to the peptidase S24 family. As to quaternary structure, homodimer.

The catalysed reaction is Hydrolysis of Ala-|-Gly bond in repressor LexA.. Functionally, represses a number of genes involved in the response to DNA damage (SOS response), including recA and lexA. In the presence of single-stranded DNA, RecA interacts with LexA causing an autocatalytic cleavage which disrupts the DNA-binding part of LexA, leading to derepression of the SOS regulon and eventually DNA repair. In Petrotoga mobilis (strain DSM 10674 / SJ95), this protein is LexA repressor.